A 1785-amino-acid chain; its full sequence is MQESQTKSMFVSRALEKILADKEVKRPQHSQLRRACQVALDEIKAEIEKQRLGTAAPPKANFIEADKYFLPFELACQSKSPRVVSTSLDCLQKLIAYGHITGNAPDSGAPGKRLIDRIVETICSCFQGPQTDEGVQLQIIKALLTAVTSPHIEIHEGTILQTVRTCYNIYLASKNLINQTTAKATLTQMLNVIFTRMENQVLQEARELEKPIQSKPQSPVIQAAAVSPKFVRLKHSQAQSKPTTPEKTDLTNGEHARSDSGKVSTENGDAPRERGSSLSGTDDGAQEVVKDILEDVVTSAIKEAAEKHGLTEPERVLGELECQECAIPPGVDENSQTNGIADDRQSLSSADNLESDAQGHQVAARFSHVLQKDAFLVFRSLCKLSMKPLGEGPPDPKSHELRSKVVSLQLLLSVLQNAGPVFRTHEMFINAIKQYLCVALSKNGVSSVPDVFELSLAIFLTLLSNFKMHLKMQIEVFFKEIFLNILETSTSSFEHRWMVIQTLTRICADAQCVVDIYVNYDCDLNAANIFERLVNDLSKIAQGRSGHELGMTPLQELSLRKKGLECLVSILKCMVEWSKDLYVNPNHQTSLGQERLTDQEIGDGKGLDMARRCSVTSMESTVSSGTQTTVQDDPEQFEVIKQQKEIIEHGIELFNKKPKRGIQFLQEQGMLGTSVEDIAQFLHQEERLDSTQVGDFLGDSARFNKEVMYAYVDQLDFCEKEFVSALRTFLEGFRLPGEAQKIDRLMEKFAARYIECNQGQTLFASADTAYVLAYSIIMLTTDLHSPQVKNKMTKEQYIKMNRGINDSKDLPEEYLSSIYEEIEGKKIAMKETKELTIATKSTKQNVASEKQRRLLYNLEMEQMAKTAKALMEAVSHAKAPFTSATHLDHVRPMFKLVWTPLLAAYSIGLQNCDDTEVASLCLEGIRCAIRIACIFGMQLERDAYVQALARFSLLTASSSITEMKQKNIDTIKTLITVAHTDGNYLGNSWHEILKCISQLELAQLIGTGVKTRYLSGSGREREGSLKGHTLAGEEFMGLGLGNLVSGGVDKRQMASFQESVGETSSQSVVVAVDRIFTGSTRLDGNAIVDFVRWLCAVSMDELASPHHPRMFSLQKIVEISYYNMNRIRLQWSRIWHVIGDHFNKVGCNPNEDVAIFAVDSLRQLSMKFLEKGELANFRFQKDFLRPFEHIMKKNRSPTIRDMAIRCIAQMVNSQAANIRSGWKNIFAVFHQAASDHDGNIVELAFQTTCHIVTTIFQHHFPAAIDSFQDAVKCLSEFACNAAFPDTSMEAIRLIRFCGKYVSERPRVLQEYTSDDMNVAPGDRVWVRGWFPILFELSCIINRCKLDVRTRGLTVMFEIMKSYGHTFEKHWWQDLFRIVFRIFDNMKLPEQLSEKSEWMTTTCNHALYAICDVFTQFYEALNEVLLSDVFAQLQWCVKQDNEQLARSGTNCLENLVISNGEKFSPEVWDETCNCMLDIFKTTIPHVLLTWRPVGMEEDSSEKHLDVDLDRQSLSSIDKNPSERGQSQLSNPTDDSWKGRPYANQKLFASLLIKCVVQLELIQTIDNIVFYPATSKKEDAEHMVAAQQDTLDADIHIETEDQGMYKYMSSQHLFKLLDCLQESHSFSKAFNSNYEQRTVLWRAGFKGKSKPNLLKQETSSLACCLRILFRMYVDENRRDSWEEIQQRLLTVCSEALAYFITVNSESHREAWTSLLLLLLTKTLKINDEKFKAHASMYYPYLCEIMQFDLIPELRAVLRKFFLRIGVVYKIWIPEEPSQVPAALSPVW.

Methionine 1 bears the N-acetylmethionine mark. The interval 2 to 224 (QESQTKSMFV…KPQSPVIQAA (223 aa)) is DCB; DCB:DCB domain and DCB:HUS domain interaction. 3 positions are modified to phosphoserine: serine 214, serine 218, and serine 227. A disordered region spans residues 232–285 (RLKHSQAQSKPTTPEKTDLTNGEHARSDSGKVSTENGDAPRERGSSLSGTDDGA). Threonine 244 carries the post-translational modification Phosphothreonine. Basic and acidic residues predominate over residues 244-260 (TPEKTDLTNGEHARSDS). Phosphoserine occurs at positions 277, 348, and 349. The segment at 508 to 528 (ADAQCVVDIYVNYDCDLNAAN) is HUS; DCB:HUS domain interaction. Serine 614 carries the post-translational modification Phosphoserine. Threonine 616 carries the post-translational modification Phosphothreonine. Serine 617 bears the Phosphoserine mark. Threonine 626 carries the post-translational modification Phosphothreonine. One can recognise an SEC7 domain in the interval 654–785 (FNKKPKRGIQ…IIMLTTDLHS (132 aa)). Phosphoserine is present on residues serine 700, serine 1511, serine 1513, serine 1514, serine 1525, serine 1528, serine 1534, and serine 1782. A compositionally biased stretch (polar residues) spans 1514–1532 (SIDKNPSERGQSQLSNPTD). The segment at 1514-1535 (SIDKNPSERGQSQLSNPTDDSW) is disordered.

In terms of assembly, homodimer. Interacts with ARFGEF1/BIG1; both proteins are probably part of the same or very similar macromolecular complexes. Interacts with PRKAR1A, PRKAR2A, PRKAR1B, PRKAR2B, PPP1CC, PDE3A, TNFRSF1A, MYCBP and EXOC7. Interacts with GABRB1, GABRB2 and GABRB3. Post-translationally, in vitro phosphorylated by PKA reducing its GEF activity and dephosphorylated by phosphatase PP1. As to expression, expressed in placenta, lung, heart, brain, kidney and pancreas.

It localises to the cytoplasm. The protein resides in the membrane. It is found in the golgi apparatus. Its subcellular location is the perinuclear region. The protein localises to the trans-Golgi network. It localises to the endosome. The protein resides in the cytoskeleton. It is found in the microtubule organizing center. Its subcellular location is the centrosome. The protein localises to the cell projection. It localises to the dendrite. The protein resides in the cytoplasmic vesicle. It is found in the synapse. With respect to regulation, inhibited by brefeldin A. Functionally, promotes guanine-nucleotide exchange on ARF1 and ARF3 and to a lower extent on ARF5 and ARF6. Promotes the activation of ARF1/ARF5/ARF6 through replacement of GDP with GTP. Involved in the regulation of Golgi vesicular transport. Required for the integrity of the endosomal compartment. Involved in trafficking from the trans-Golgi network (TGN) to endosomes and is required for membrane association of the AP-1 complex and GGA1. Seems to be involved in recycling of the transferrin receptor from recycling endosomes to the plasma membrane. Probably is involved in the exit of GABA(A) receptors from the endoplasmic reticulum. Involved in constitutive release of tumor necrosis factor receptor 1 via exosome-like vesicles; the function seems to involve PKA and specifically PRKAR2B. Proposed to act as A kinase-anchoring protein (AKAP) and may mediate crosstalk between Arf and PKA pathways. The polypeptide is Brefeldin A-inhibited guanine nucleotide-exchange protein 2 (ARFGEF2) (Homo sapiens (Human)).